The primary structure comprises 226 residues: Lysoplasmalogenase TMEM86B (226 aa).

The Cytoplasmic portion of the chain corresponds to 1-23 (MDAGKAGQTLKTHCSAQRPDVCR). A helical transmembrane segment spans residues 24 to 40 (WLSPFILSCCVYFCLWI). The Extracellular segment spans residues 41–46 (PEDQLS). Residues 47–67 (WFAALVKCLPVLCLAGFLWVM) traverse the membrane as a helical segment. Over 68–75 (SPSGGYTQ) the chain is Cytoplasmic. The chain crosses the membrane as a helical span at residues 76-93 (LLQGALVCSAVGDACLIW). At 94-100 (PAAFVPG) the chain is on the extracellular side. Residues 101–117 (MAAFATAHLLYVWAFGF) form a helical membrane-spanning segment. The Cytoplasmic segment spans residues 118 to 123 (SPLQPG). The helical transmembrane segment at 124–140 (LLLLIILAPGPYLSLVL) threads the bilayer. Over 141-146 (QHLEPD) the chain is Extracellular. Residues 147–163 (MVLPVAAYGLILMAMLW) traverse the membrane as a helical segment. Over 164-171 (RGLAQGGS) the chain is Cytoplasmic. Residues 172 to 188 (AGWGALLFTLSDGVLAW) form a helical membrane-spanning segment. Residues 189–199 (DTFAQPLPHAH) lie on the Extracellular side of the membrane. A helical membrane pass occupies residues 200–218 (LVIMTTYYAAQLLITLSAL). The Cytoplasmic portion of the chain corresponds to 219 to 226 (RSPVPKTD).

Belongs to the TMEM86 family. In terms of assembly, homodimer.

It localises to the endoplasmic reticulum membrane. The protein resides in the cytoplasm. It catalyses the reaction a 1-O-(1Z-alkenyl)-sn-glycero-3-phosphocholine + H2O = a 2,3-saturated aldehyde + sn-glycerol 3-phosphocholine. The enzyme catalyses a 1-O-(1Z-alkenyl)-sn-glycero-3-phosphoethanolamine + H2O = a 2,3-saturated aldehyde + sn-glycero-3-phosphoethanolamine. With respect to regulation, competitively inhibited by lysophosphatidic acid. In terms of biological role, catalyzes the hydrolysis of the vinyl ether bond of choline or ethanolamine lysoplasmalogens, forming fatty aldehyde and glycerophosphocholine or glycerophosphoethanolamine, respectively and is specific for the sn-2-deacylated (lyso) form of plasmalogen. The protein is Lysoplasmalogenase TMEM86B (TMEM86B) of Homo sapiens (Human).